A 1707-amino-acid chain; its full sequence is Histone-lysine N-methyltransferase SETD1A (1707 aa).

An interaction with WDR82 region spans residues 60 to 89 (LQDPRCHVRSKNRDFSLPVPKFKLDEFYIG). Residues 84–172 (DEFYIGQIPL…NIIHAQLDIK (89 aa)) enclose the RRM domain. 7 disordered regions span residues 194–308 (PTGG…YQDA), 331–363 (TAAT…RSSD), 381–486 (SYPP…AQHS), 506–655 (LASD…PPPH), 834–854 (AKPF…EKTK), 891–1251 (PSFK…GTEV), and 1264–1293 (ARRG…RPLL). A compositionally biased stretch (polar residues) spans 239-277 (NGTPCSQDTSFSSSRQDTPSSFGQFTPQSSQGTPYTSRG). Composition is skewed to low complexity over residues 278 to 295 (STPY…TSTS) and 331 to 357 (TAAT…SSSS). Residues 430 to 440 (SEAPPPEPPEP) are compositionally biased toward pro residues. 2 positions are modified to phosphoserine: Ser-459 and Ser-464. The segment covering 459–473 (SPRPASPARSGSPAP) has biased composition (low complexity). The span at 474-486 (ETTNESVPFAQHS) shows a compositional bias: polar residues. Phosphoserine is present on residues Ser-508 and Ser-565. A compositionally biased stretch (polar residues) spans 568-578 (ANGQNQASPCS). Pro residues-rich tracts occupy residues 593–617 (SPPP…PPPY) and 624–655 (GYPP…PPPH). Basic and acidic residues predominate over residues 844–854 (QAKEEDKEKTK). Ser-915 bears the Phosphoserine mark. Composition is skewed to acidic residues over residues 918 to 927 (AEEDEDDPEQ) and 976 to 992 (KDEE…DREE). Residues 993-1002 (AVDTTKKETE) are compositionally biased toward basic and acidic residues. Over residues 1003–1012 (VSDGEDEESD) the composition is skewed to acidic residues. Low complexity predominate over residues 1032 to 1060 (DSESSSSSSSSSSSSSSSSSSSSSSSSES). Positions 1077-1094 (ASPPPREVPVPTPAPVEV) are enriched in pro residues. Ser-1103 carries the phosphoserine modification. Pro residues predominate over residues 1127–1145 (PSAPLRPPEPPAGPPAPAP). The segment covering 1275 to 1284 (EDSEATETSD) has biased composition (acidic residues). The HCFC1-binding motif (HBM) signature appears at 1299–1303 (EHNYA). Disordered stretches follow at residues 1307-1417 (KPTP…AYEP) and 1472-1499 (NLTT…SEGY). Pro residues predominate over residues 1308-1323 (PTPPAPALRPPEPVPA). Acidic residues predominate over residues 1360-1377 (EGEEEGEEEGEEEEEESS). Residues 1390-1403 (RRRSLRSHARRRRP) are compositionally biased toward basic residues. A compositionally biased stretch (pro residues) spans 1404–1414 (PPPPPPPPPRA). An interaction with CFP1 region spans residues 1415-1450 (YEPRSEFEQMTILYDIWNSGLDSEDMSYLRLTYERL). The interaction with ASH2L, RBBP5 and WDR5 stretch occupies residues 1450-1537 (LLQQTSGADW…GTNRVLSERR (88 aa)). Residues 1492-1497 (GSARSE) carry the WDR5 interaction motif (WIN) motif. Positions 1537–1542 (RSEQRR) match the RxxxRR motif motif. Residues 1568–1685 (KKLRFGRSRI…VDEEITYDYK (118 aa)) form the SET domain. Residue Tyr-1684 participates in S-adenosyl-L-methionine binding. The Post-SET domain maps to 1691 to 1707 (NKIPCLCGTESCRGSLN).

The protein belongs to the class V-like SAM-binding methyltransferase superfamily. Component of the SET1A/COMPASS complex composed of the catalytic subunit SETD1A, WDR5, WDR82, RBBP5, ASH2L/ASH2, CXXC1/CFP1, HCFC1 and DPY30 homotrimer. Forms a core complex with the evolutionary conserved subcomplex WRAD composed of WDR5, RBBP5, ASH2L/ASH2 and DPY30 subunits; WRAD differentially stimulates the methyltransferase activity. Interacts with BOD1L1 (via COMPASS-Shg1 domain) at replication forks. Interacts with HCFC1. Interacts with ASH2/ASH2L. Interacts with CXXC1/CFP1. Interacts with RBBP5. Interacts (via N-terminal region) with WDR82; the interaction is direct. Interacts (via the RRM domain) with hyperphosphorylated C-terminal domain (CTD) of RNA polymerase II large subunit (POLR2A) only in the presence of WDR82. Binds specifically to CTD heptad repeats phosphorylated on 'Ser-5' of each heptad. Interacts with ZNF335. Interacts with SUPT6H. Interacts with NAP1L1. Interacts (via WIN motif) with WDR5.

It is found in the nucleus speckle. The protein resides in the chromosome. Its subcellular location is the cytoplasm. It catalyses the reaction L-lysyl(4)-[histone H3] + S-adenosyl-L-methionine = N(6)-methyl-L-lysyl(4)-[histone H3] + S-adenosyl-L-homocysteine + H(+). It carries out the reaction N(6)-methyl-L-lysyl(4)-[histone H3] + S-adenosyl-L-methionine = N(6),N(6)-dimethyl-L-lysyl(4)-[histone H3] + S-adenosyl-L-homocysteine + H(+). The catalysed reaction is N(6),N(6)-dimethyl-L-lysyl(4)-[histone H3] + S-adenosyl-L-methionine = N(6),N(6),N(6)-trimethyl-L-lysyl(4)-[histone H3] + S-adenosyl-L-homocysteine + H(+). Functionally, histone methyltransferase that catalyzes methyl group transfer from S-adenosyl-L-methionine to the epsilon-amino group of 'Lys-4' of histone H3 (H3K4) via a non-processive mechanism. Part of chromatin remodeling machinery, forms H3K4me1, H3K4me2 and H3K4me3 methylation marks at active chromatin sites where transcription and DNA repair take place. Responsible for H3K4me3 enriched promoters and transcriptional programming of inner mass stem cells and neuron progenitors during embryogenesis. Required for H3K4me1 mark at stalled replication forks. Mediates FANCD2-dependent nucleosome remodeling and RAD51 nucleofilaments stabilization at reversed forks, protecting them from nucleolytic degradation. Does not methylate 'Lys-4' of histone H3 if the neighboring 'Lys-9' residue is already methylated. Binds RNAs involved in RNA processing and the DNA damage response. The chain is Histone-lysine N-methyltransferase SETD1A (SETD1A) from Homo sapiens (Human).